Reading from the N-terminus, the 100-residue chain is ATP synthase subunit c (100 aa).

2 helical membrane-spanning segments follow: residues 27–47 and 72–92; these read SVIA…IGMG and FIAL…TLIV.

This sequence belongs to the ATPase C chain family. In terms of assembly, F-type ATPases have 2 components, F(1) - the catalytic core - and F(0) - the membrane proton channel. F(1) has five subunits: alpha(3), beta(3), gamma(1), delta(1), epsilon(1). F(0) has three main subunits: a(1), b(2) and c(10-14). The alpha and beta chains form an alternating ring which encloses part of the gamma chain. F(1) is attached to F(0) by a central stalk formed by the gamma and epsilon chains, while a peripheral stalk is formed by the delta and b chains.

The protein resides in the cell inner membrane. In terms of biological role, f(1)F(0) ATP synthase produces ATP from ADP in the presence of a proton or sodium gradient. F-type ATPases consist of two structural domains, F(1) containing the extramembraneous catalytic core and F(0) containing the membrane proton channel, linked together by a central stalk and a peripheral stalk. During catalysis, ATP synthesis in the catalytic domain of F(1) is coupled via a rotary mechanism of the central stalk subunits to proton translocation. The polypeptide is ATP synthase subunit c (Campylobacter curvus (strain 525.92)).